A 485-amino-acid polypeptide reads, in one-letter code: Phosphoglucosamine mutase (485 aa).

S133 serves as the catalytic Phosphoserine intermediate. Mg(2+) is bound by residues S133, D274, D276, and D278. S133 carries the post-translational modification Phosphoserine.

This sequence belongs to the phosphohexose mutase family. Mg(2+) is required as a cofactor. Post-translationally, activated by phosphorylation.

The enzyme catalyses alpha-D-glucosamine 1-phosphate = D-glucosamine 6-phosphate. In terms of biological role, catalyzes the conversion of glucosamine-6-phosphate to glucosamine-1-phosphate. In Crocosphaera subtropica (strain ATCC 51142 / BH68) (Cyanothece sp. (strain ATCC 51142)), this protein is Phosphoglucosamine mutase.